Reading from the N-terminus, the 508-residue chain is MNCQQLWLGFLLPMTVSGRVLGLAEVAPVDYLSQYGYLQKPLEGSNNFKPEDITEALRAFQEASELPVSGQLDDATRARMRQPRCGLEDPFNQKTLKYLLLGRWRKKHLTFRILNLPSTLPPHTARAALRQAFQDWSNVAPLTFQEVQAGAADIRLSFHGRQSSYCSNTFDGPGRVLAHADIPELGSVHFDEDEFWTEGTYRGVNLRIIAAHEVGHALGLGHSRYSQALMAPVYEGYRPHFKLHPDDVAGIQALYGKKSPVIRDEEEEETELPTVPPVPTEPSPMPDPCSSELDAMMLGPRGKTYAFKGDYVWTVSDSGPGPLFRVSALWEGLPGNLDAAVYSPRTQWIHFFKGDKVWRYINFKMSPGFPKKLNRVEPNLDAALYWPLNQKVFLFKGSGYWQWDELARTDFSSYPKPIKGLFTGVPNQPSAAMSWQDGRVYFFKGKVYWRLNQQLRVEKGYPRNISHNWMHCRPRTIDTTPSGGNTTPSGTGITLDTTLSATETTFEY.

The signal sequence occupies residues 1–18 (MNCQQLWLGFLLPMTVSG). A propeptide spanning residues 19 to 97 (RVLGLAEVAP…EDPFNQKTLK (79 aa)) is cleaved from the precursor. The Cysteine switch signature appears at 83-90 (PRCGLEDP). Zn(2+) contacts are provided by Cys-85 and His-212. The active site involves Glu-213. The Zn(2+) site is built by His-216 and His-222. The segment at 262-288 (IRDEEEEETELPTVPPVPTEPSPMPDP) is disordered. The segment covering 274 to 287 (TVPPVPTEPSPMPD) has biased composition (pro residues). Hemopexin repeat units lie at residues 286–333 (PDPC…WEGL), 334–380 (PGNL…EPNL), 381–425 (DAAL…FTGV), and 426–472 (PNQP…WMHC). Cys-289 and Cys-472 are disulfide-bonded. N-linked (GlcNAc...) asparagine glycosylation is present at Asn-464.

The protein belongs to the peptidase M10A family. It depends on Zn(2+) as a cofactor. Ca(2+) is required as a cofactor. Post-translationally, activated by autolytic cleavage after Lys-97. Tyrosine phosphorylated by PKDCC/VLK. In terms of tissue distribution, expressed in mammary gland, placenta, lung, pancreas, ovary, small intestine, spleen, thymus, prostate, testis colon, heart and blood vessel walls. Not detected in brain and peripheral blood leukocytes. Also expressed in the synovial fluid of normal and rheumatoid patients.

The protein localises to the secreted. It localises to the extracellular space. It is found in the extracellular matrix. Its activity is regulated as follows. Strongly inhibited by TIMP-2, TIMP-3 and TIMP-4, while TIMP-1 is less efficient. Functionally, endopeptidase that degrades various components of the extracellular matrix, such as aggrecan and cartilage oligomeric matrix protein (comp), during development, haemostasis and pathological conditions (arthritic disease). May also play a role in neovascularization or angiogenesis. Hydrolyzes collagen type IV, laminin, nidogen, nascin-C isoform, fibronectin, and type I gelatin. This is Matrix metalloproteinase-19 (MMP19) from Homo sapiens (Human).